The primary structure comprises 179 residues: uncharacterized protein (179 aa).

This is an uncharacterized protein from Rickettsia conorii (strain ATCC VR-613 / Malish 7).